The chain runs to 291 residues: tRNA-uridine aminocarboxypropyltransferase 1 (291 aa).

A disordered region spans residues 158–181; that stretch reads KNSAYEPSSKRPKFSPENDKNTYE. The span at 171 to 181 shows a compositional bias: basic and acidic residues; sequence FSPENDKNTYE. The short motif at 199-202 is the DXTW element; the sequence is DSTW.

Belongs to the TDD superfamily. DTWD1 family.

It localises to the nucleus. The enzyme catalyses a uridine in tRNA + S-adenosyl-L-methionine = a 3-[(3S)-3-amino-3-carboxypropyl]uridine in tRNA + S-methyl-5'-thioadenosine + H(+). In terms of biological role, catalyzes the formation of 3-(3-amino-3-carboxypropyl)uridine (acp3U) at position 20 in the D-loop of several cytoplasmic tRNAs (acp3U(20)). This is tRNA-uridine aminocarboxypropyltransferase 1 from Xenopus laevis (African clawed frog).